Here is a 373-residue protein sequence, read N- to C-terminus: Methionine import ATP-binding protein MetN 1 (373 aa).

The ABC transporter domain occupies 29 to 270 (ILIDRVRKVY…PRHEVTRRFV (242 aa)). ATP is bound at residue 67-74 (GRSGAGKS).

Belongs to the ABC transporter superfamily. Methionine importer (TC 3.A.1.24) family. In terms of assembly, the complex is composed of two ATP-binding proteins (MetN), two transmembrane proteins (MetI) and a solute-binding protein (MetQ).

The protein resides in the cell inner membrane. The enzyme catalyses L-methionine(out) + ATP + H2O = L-methionine(in) + ADP + phosphate + H(+). It catalyses the reaction D-methionine(out) + ATP + H2O = D-methionine(in) + ADP + phosphate + H(+). In terms of biological role, part of the ABC transporter complex MetNIQ involved in methionine import. Responsible for energy coupling to the transport system. This is Methionine import ATP-binding protein MetN 1 from Rhodopseudomonas palustris (strain ATCC BAA-98 / CGA009).